The primary structure comprises 130 residues: S-adenosylmethionine decarboxylase proenzyme (130 aa).

Serine 63 functions as the Schiff-base intermediate with substrate; via pyruvic acid in the catalytic mechanism. Pyruvic acid (Ser); by autocatalysis is present on serine 63. Histidine 68 functions as the Proton acceptor; for processing activity in the catalytic mechanism. Cysteine 83 functions as the Proton donor; for catalytic activity in the catalytic mechanism.

This sequence belongs to the prokaryotic AdoMetDC family. Type 1 subfamily. In terms of assembly, heterotetramer of two alpha and two beta chains arranged as a dimer of alpha/beta heterodimers. Pyruvate is required as a cofactor. In terms of processing, is synthesized initially as an inactive proenzyme. Formation of the active enzyme involves a self-maturation process in which the active site pyruvoyl group is generated from an internal serine residue via an autocatalytic post-translational modification. Two non-identical subunits are generated from the proenzyme in this reaction, and the pyruvate is formed at the N-terminus of the alpha chain, which is derived from the carboxyl end of the proenzyme. The post-translation cleavage follows an unusual pathway, termed non-hydrolytic serinolysis, in which the side chain hydroxyl group of the serine supplies its oxygen atom to form the C-terminus of the beta chain, while the remainder of the serine residue undergoes an oxidative deamination to produce ammonia and the pyruvoyl group blocking the N-terminus of the alpha chain.

The enzyme catalyses S-adenosyl-L-methionine + H(+) = S-adenosyl 3-(methylsulfanyl)propylamine + CO2. The protein operates within amine and polyamine biosynthesis; S-adenosylmethioninamine biosynthesis; S-adenosylmethioninamine from S-adenosyl-L-methionine: step 1/1. Functionally, catalyzes the decarboxylation of S-adenosylmethionine to S-adenosylmethioninamine (dcAdoMet), the propylamine donor required for the synthesis of the polyamines spermine and spermidine from the diamine putrescine. In Thermotoga maritima (strain ATCC 43589 / DSM 3109 / JCM 10099 / NBRC 100826 / MSB8), this protein is S-adenosylmethionine decarboxylase proenzyme (speH).